The chain runs to 121 residues: Ribosome-binding factor A (121 aa).

It belongs to the RbfA family. Monomer. Binds 30S ribosomal subunits, but not 50S ribosomal subunits or 70S ribosomes.

The protein resides in the cytoplasm. In terms of biological role, one of several proteins that assist in the late maturation steps of the functional core of the 30S ribosomal subunit. Associates with free 30S ribosomal subunits (but not with 30S subunits that are part of 70S ribosomes or polysomes). Required for efficient processing of 16S rRNA. May interact with the 5'-terminal helix region of 16S rRNA. This is Ribosome-binding factor A from Paraburkholderia phytofirmans (strain DSM 17436 / LMG 22146 / PsJN) (Burkholderia phytofirmans).